Here is a 272-residue protein sequence, read N- to C-terminus: Ras-related protein RSR1 (272 aa).

Residue 10 to 17 (GAGGVGKS) participates in GTP binding. The Effector region signature appears at 32-40 (YDPTIEDSY). GTP is bound by residues 57–61 (DTAGI) and 116–119 (NKAD). Residues 177 to 272 (DARNQSQQFS…KKNASTCTIL (96 aa)) form a disordered region. Composition is skewed to polar residues over residues 180–232 (NQSQ…STPV) and 245–258 (SGSS…ATSQ). C269 is modified (cysteine methyl ester). The S-geranylgeranyl cysteine moiety is linked to residue C269. Positions 270 to 272 (TIL) are cleaved as a propeptide — removed in mature form.

The protein belongs to the small GTPase superfamily. Ras family.

It localises to the cell membrane. It catalyses the reaction GTP + H2O = GDP + phosphate + H(+). With respect to regulation, alternates between an inactive form bound to GDP and an active form bound to GTP. Activated by a guanine nucleotide-exchange factor (GEF) and inactivated by a GTPase-activating protein (GAP). Functionally, ras-related protein which binds GDP/GTP and possesses intrinsic GTPase activity. Involved in development of cell polarity during the cell division cycle, and essential for bud emergence. This chain is Ras-related protein RSR1, found in Saccharomyces cerevisiae (strain ATCC 204508 / S288c) (Baker's yeast).